A 339-amino-acid chain; its full sequence is Heat-inducible transcription repressor HrcA (339 aa).

This sequence belongs to the HrcA family.

In terms of biological role, negative regulator of class I heat shock genes (grpE-dnaK-dnaJ and groELS operons). Prevents heat-shock induction of these operons. This chain is Heat-inducible transcription repressor HrcA, found in Paraburkholderia phytofirmans (strain DSM 17436 / LMG 22146 / PsJN) (Burkholderia phytofirmans).